The following is a 196-amino-acid chain: Ribosomal RNA large subunit methyltransferase E (196 aa).

5 residues coordinate S-adenosyl-L-methionine: G52, W54, D72, D88, and D111. Residue K151 is the Proton acceptor of the active site.

This sequence belongs to the class I-like SAM-binding methyltransferase superfamily. RNA methyltransferase RlmE family.

Its subcellular location is the cytoplasm. The catalysed reaction is uridine(2552) in 23S rRNA + S-adenosyl-L-methionine = 2'-O-methyluridine(2552) in 23S rRNA + S-adenosyl-L-homocysteine + H(+). Specifically methylates the uridine in position 2552 of 23S rRNA at the 2'-O position of the ribose in the fully assembled 50S ribosomal subunit. The chain is Ribosomal RNA large subunit methyltransferase E from Cenarchaeum symbiosum (strain A).